Reading from the N-terminus, the 793-residue chain is Probable exo-1,4-beta-xylosidase xlnD (793 aa).

The N-terminal stretch at 1–20 (MPRVASVAAVLAALLPSALG) is a signal peptide. Residues Asn-23, Asn-87, and Asn-142 are each glycosylated (N-linked (GlcNAc...) asparagine). Residue Asp-310 is part of the active site. N-linked (GlcNAc...) asparagine glycosylation is found at Asn-326, Asn-385, Asn-404, Asn-440, Asn-477, Asn-518, Asn-559, Asn-614, Asn-652, Asn-679, and Asn-701.

This sequence belongs to the glycosyl hydrolase 3 family.

It localises to the secreted. It carries out the reaction Hydrolysis of (1-&gt;4)-beta-D-xylans, to remove successive D-xylose residues from the non-reducing termini.. It participates in glycan degradation; xylan degradation. Functionally, xylan 1,4-beta-xylosidase involved in the hydrolysis of xylan, a major structural heterogeneous polysaccharide found in plant biomass representing the second most abundant polysaccharide in the biosphere, after cellulose. In Aspergillus terreus (strain NIH 2624 / FGSC A1156), this protein is Probable exo-1,4-beta-xylosidase xlnD (xlnD).